A 230-amino-acid polypeptide reads, in one-letter code: UPF0173 metal-dependent hydrolase Pden_0574 (230 aa).

It belongs to the UPF0173 family.

The sequence is that of UPF0173 metal-dependent hydrolase Pden_0574 from Paracoccus denitrificans (strain Pd 1222).